Consider the following 335-residue polypeptide: Tetraacyldisaccharide 4'-kinase (335 aa).

59–66 is a binding site for ATP; it reads TAGGNGKT.

This sequence belongs to the LpxK family.

It carries out the reaction a lipid A disaccharide + ATP = a lipid IVA + ADP + H(+). It participates in glycolipid biosynthesis; lipid IV(A) biosynthesis; lipid IV(A) from (3R)-3-hydroxytetradecanoyl-[acyl-carrier-protein] and UDP-N-acetyl-alpha-D-glucosamine: step 6/6. Transfers the gamma-phosphate of ATP to the 4'-position of a tetraacyldisaccharide 1-phosphate intermediate (termed DS-1-P) to form tetraacyldisaccharide 1,4'-bis-phosphate (lipid IVA). This Vibrio campbellii (strain ATCC BAA-1116) protein is Tetraacyldisaccharide 4'-kinase.